The sequence spans 290 residues: 4-hydroxybenzoate octaprenyltransferase (290 aa).

8 helical membrane passes run 23–43 (IGAL…TPGV), 46–66 (LWIL…GCVV), 99–119 (LFVV…TMTI), 141–161 (LPQV…FAAV), 163–183 (ESVP…AVAY), 213–233 (LIIG…GELN), 234–254 (GLGW…VYQQ), and 268–288 (AFMN…MSYW).

The protein belongs to the UbiA prenyltransferase family. Mg(2+) serves as cofactor.

It localises to the cell inner membrane. The catalysed reaction is all-trans-octaprenyl diphosphate + 4-hydroxybenzoate = 4-hydroxy-3-(all-trans-octaprenyl)benzoate + diphosphate. The protein operates within cofactor biosynthesis; ubiquinone biosynthesis. Catalyzes the prenylation of para-hydroxybenzoate (PHB) with an all-trans polyprenyl group. Mediates the second step in the final reaction sequence of ubiquinone-8 (UQ-8) biosynthesis, which is the condensation of the polyisoprenoid side chain with PHB, generating the first membrane-bound Q intermediate 3-octaprenyl-4-hydroxybenzoate. This Escherichia coli O6:K15:H31 (strain 536 / UPEC) protein is 4-hydroxybenzoate octaprenyltransferase.